A 124-amino-acid polypeptide reads, in one-letter code: Small ribosomal subunit protein uS12 (124 aa).

A disordered region spans residues 1–24; that stretch reads MTTINQLVRKPRQATTYKSASPAL. 3-methylthioaspartic acid is present on D89.

The protein belongs to the universal ribosomal protein uS12 family. As to quaternary structure, part of the 30S ribosomal subunit. Contacts proteins S8 and S17. May interact with IF1 in the 30S initiation complex.

Functionally, with S4 and S5 plays an important role in translational accuracy. Interacts with and stabilizes bases of the 16S rRNA that are involved in tRNA selection in the A site and with the mRNA backbone. Located at the interface of the 30S and 50S subunits, it traverses the body of the 30S subunit contacting proteins on the other side and probably holding the rRNA structure together. The combined cluster of proteins S8, S12 and S17 appears to hold together the shoulder and platform of the 30S subunit. The polypeptide is Small ribosomal subunit protein uS12 (Xanthomonas axonopodis pv. citri (strain 306)).